Reading from the N-terminus, the 562-residue chain is Glucocorticoid modulatory element-binding protein 1 (562 aa).

Position 2 is an N-acetylalanine (alanine 2). In terms of domain architecture, SAND spans 72–156 (ASSIEANEDM…RKMMDSGQID (85 aa)). Cysteine 103 is a binding site for Zn(2+). Residues lysine 129, lysine 133, lysine 136, and arginine 147 each contribute to the DNA site. Zn(2+)-binding residues include histidine 160, cysteine 164, and cysteine 168. A coiled-coil region spans residues 311 to 357 (LDNRRKQVEHGEEQFLYTLADLERQLEEQKKQAQDPRLKSQTVQNVV). The tract at residues 360-384 (PVSTPKPPKRPRLQRPASTTVLSPS) is disordered. Residues 375 to 384 (PASTTVLSPS) show a composition bias toward polar residues.

Homodimer, and heterodimer of GMEB1 and GMEB2. Interacts with the glucocorticoid receptor (NR3C1) and NCOA2/TIF2. May interact with HSP27 and CREB-binding protein (CBP). Interacts with TRIM63.

The protein localises to the nucleus. The protein resides in the cytoplasm. In terms of biological role, trans-acting factor that binds to glucocorticoid modulatory elements (GME) present in the TAT (tyrosine aminotransferase) promoter and increases sensitivity to low concentrations of glucocorticoids. Also binds to the transferrin receptor promoter. This chain is Glucocorticoid modulatory element-binding protein 1 (Gmeb1), found in Rattus norvegicus (Rat).